Here is a 95-residue protein sequence, read N- to C-terminus: Cell division topological specificity factor (95 aa).

Belongs to the MinE family.

Prevents the cell division inhibition by proteins MinC and MinD at internal division sites while permitting inhibition at polar sites. This ensures cell division at the proper site by restricting the formation of a division septum at the midpoint of the long axis of the cell. The chain is Cell division topological specificity factor from Trichodesmium erythraeum (strain IMS101).